Here is a 216-residue protein sequence, read N- to C-terminus: Uracil phosphoribosyltransferase (216 aa).

5-phospho-alpha-D-ribose 1-diphosphate is bound by residues R84, R109, and 137-145 (DPMLATGGS). Uracil-binding positions include I202 and 207–209 (GDA). D208 contacts 5-phospho-alpha-D-ribose 1-diphosphate.

The protein belongs to the UPRTase family. The cofactor is Mg(2+).

The catalysed reaction is UMP + diphosphate = 5-phospho-alpha-D-ribose 1-diphosphate + uracil. The protein operates within pyrimidine metabolism; UMP biosynthesis via salvage pathway; UMP from uracil: step 1/1. Allosterically activated by GTP. Functionally, catalyzes the conversion of uracil and 5-phospho-alpha-D-ribose 1-diphosphate (PRPP) to UMP and diphosphate. The sequence is that of Uracil phosphoribosyltransferase from Nostoc sp. (strain PCC 7120 / SAG 25.82 / UTEX 2576).